The primary structure comprises 434 residues: UDP-N-acetylglucosamine 1-carboxyvinyltransferase 1 (434 aa).

Phosphoenolpyruvate is bound at residue 22–23; that stretch reads KN. Arginine 93 contributes to the UDP-N-acetyl-alpha-D-glucosamine binding site. Cysteine 117 (proton donor) is an active-site residue. Cysteine 117 bears the 2-(S-cysteinyl)pyruvic acid O-phosphothioketal mark. UDP-N-acetyl-alpha-D-glucosamine-binding positions include 122 to 126, aspartate 306, and valine 328; that span reads RPIDQ.

The protein belongs to the EPSP synthase family. MurA subfamily.

It localises to the cytoplasm. It carries out the reaction phosphoenolpyruvate + UDP-N-acetyl-alpha-D-glucosamine = UDP-N-acetyl-3-O-(1-carboxyvinyl)-alpha-D-glucosamine + phosphate. Its pathway is cell wall biogenesis; peptidoglycan biosynthesis. Cell wall formation. Adds enolpyruvyl to UDP-N-acetylglucosamine. The chain is UDP-N-acetylglucosamine 1-carboxyvinyltransferase 1 from Bacillus cereus (strain ATCC 10987 / NRS 248).